The primary structure comprises 710 residues: Assimilatory nitrate reductase catalytic subunit (710 aa).

In terms of domain architecture, 4Fe-4S Mo/W bis-MGD-type spans 19–77 (EKTYDTQCPFCSMQCKMQLVEQTIVTRKKYTAIGIDNPTTQGRLCIKGMNAHQHALNSS). C26, C29, C33, and C63 together coordinate [4Fe-4S] cluster.

This sequence belongs to the prokaryotic molybdopterin-containing oxidoreductase family. [4Fe-4S] cluster serves as cofactor. Mo-bis(molybdopterin guanine dinucleotide) is required as a cofactor.

Its pathway is nitrogen metabolism; nitrate reduction (denitrification); dinitrogen from nitrate: step 1/4. Functionally, nitrate reductase is a key enzyme involved in the first step of nitrate assimilation in plants, fungi and bacteria. This is Assimilatory nitrate reductase catalytic subunit (nasC) from Bacillus subtilis (strain 168).